A 154-amino-acid chain; its full sequence is Peptide methionine sulfoxide reductase MsrB (154 aa).

Positions 28 to 150 constitute a MsrB domain; it reads DQQWREQLSE…NSVSLIFNKI (123 aa). The Zn(2+) site is built by Cys67, Cys70, Cys116, and Cys119. Cys139 functions as the Nucleophile in the catalytic mechanism.

The protein belongs to the MsrB Met sulfoxide reductase family. It depends on Zn(2+) as a cofactor.

It carries out the reaction L-methionyl-[protein] + [thioredoxin]-disulfide + H2O = L-methionyl-(R)-S-oxide-[protein] + [thioredoxin]-dithiol. This is Peptide methionine sulfoxide reductase MsrB from Vibrio vulnificus (strain YJ016).